The primary structure comprises 246 residues: Acetoacetate decarboxylase (246 aa).

Lys115 serves as the catalytic Schiff-base intermediate with acetoacetate.

It belongs to the ADC family.

It carries out the reaction acetoacetate + H(+) = acetone + CO2. In terms of biological role, catalyzes the conversion of acetoacetate to acetone and carbon dioxide. The protein is Acetoacetate decarboxylase of Clostridium beijerinckii (Clostridium MP).